We begin with the raw amino-acid sequence, 189 residues long: Probable nicotinate-nucleotide adenylyltransferase (189 aa).

The protein belongs to the NadD family.

The catalysed reaction is nicotinate beta-D-ribonucleotide + ATP + H(+) = deamido-NAD(+) + diphosphate. Its pathway is cofactor biosynthesis; NAD(+) biosynthesis; deamido-NAD(+) from nicotinate D-ribonucleotide: step 1/1. Its function is as follows. Catalyzes the reversible adenylation of nicotinate mononucleotide (NaMN) to nicotinic acid adenine dinucleotide (NaAD). This is Probable nicotinate-nucleotide adenylyltransferase from Bacillus cereus (strain B4264).